Here is an 87-residue protein sequence, read N- to C-terminus: Mu-theraphotoxin-Cg1a (87 aa).

Residues 1-21 form the signal peptide; that stretch reads MKVLVLITLAVLGAMFVWTSA. Residues 22-50 constitute a propeptide that is removed on maturation; the sequence is AELEERGSDQRDSPAWVKSMERIFQSEER. Disulfide bonds link Cys52–Cys66, Cys59–Cys71, and Cys65–Cys79.

Belongs to the neurotoxin 10 (Hwtx-1) family. 39 (Jztx-34) subfamily. Expressed by the venom gland.

The protein resides in the secreted. Its function is as follows. Potent and selective inhibitor of hNav1.7/SCN9A (IC(50)=610 nM). Also shows a weak activity towards Nav1.3/SCN3A (IC(50)=7950 nM). In addition, inhibits voltage-gated potassium channels (Kv) in rat DRG neurons. It does not alter the voltage dependence of activation, but it causes a small hyperpolarizing shift in the steady-state inactivations of Nav1.7/SNC9A. Chimera experiments show that the toxin binds to the DIIS3-S4 linker (site 4) of Nav1.7/SCN9A, whereas Nav1.7/SCN9A Asp-827 residue is shown by substitution experiments to be critical for its sensitivity. The toxin traps the domain II voltage sensor in the closed configuration, and not in an outward position. In vivo, shows analgesic activity in three rodent pain models (formalin-induced, acid-induced, and thermal). The sequence is that of Mu-theraphotoxin-Cg1a from Chilobrachys guangxiensis (Chinese earth tiger tarantula).